Reading from the N-terminus, the 477-residue chain is Bifunctional protein HldE (477 aa).

Positions 1–320 (MKDSLPAFEK…SLSDTHHSET (320 aa)) are ribokinase. An ATP-binding site is contributed by 195 to 198 (NLHE). Asp-264 is an active-site residue. The segment at 346–477 (MTNGCFDILH…KIIENIMANQ (132 aa)) is cytidylyltransferase.

The protein in the N-terminal section; belongs to the carbohydrate kinase PfkB family. This sequence in the C-terminal section; belongs to the cytidylyltransferase family. Homodimer.

It carries out the reaction D-glycero-beta-D-manno-heptose 7-phosphate + ATP = D-glycero-beta-D-manno-heptose 1,7-bisphosphate + ADP + H(+). The enzyme catalyses D-glycero-beta-D-manno-heptose 1-phosphate + ATP + H(+) = ADP-D-glycero-beta-D-manno-heptose + diphosphate. Its pathway is nucleotide-sugar biosynthesis; ADP-L-glycero-beta-D-manno-heptose biosynthesis; ADP-L-glycero-beta-D-manno-heptose from D-glycero-beta-D-manno-heptose 7-phosphate: step 1/4. The protein operates within nucleotide-sugar biosynthesis; ADP-L-glycero-beta-D-manno-heptose biosynthesis; ADP-L-glycero-beta-D-manno-heptose from D-glycero-beta-D-manno-heptose 7-phosphate: step 3/4. Its function is as follows. Catalyzes the phosphorylation of D-glycero-D-manno-heptose 7-phosphate at the C-1 position to selectively form D-glycero-beta-D-manno-heptose-1,7-bisphosphate. Functionally, catalyzes the ADP transfer from ATP to D-glycero-beta-D-manno-heptose 1-phosphate, yielding ADP-D-glycero-beta-D-manno-heptose. This Shewanella piezotolerans (strain WP3 / JCM 13877) protein is Bifunctional protein HldE.